A 184-amino-acid polypeptide reads, in one-letter code: Envelope protein 169 (184 aa).

Residues Met1–Lys6 are Intravirion-facing. Residues Met7–Ile27 form a helical membrane-spanning segment. The Virion surface portion of the chain corresponds to Ser28 to Leu184.

This sequence belongs to the asfivirus envelope protein p22 family.

It localises to the virion membrane. The protein resides in the host cell membrane. In Ornithodoros (relapsing fever ticks), this protein is Envelope protein 169.